A 58-amino-acid chain; its full sequence is uncharacterized protein (58 aa).

This is an uncharacterized protein from Archaeoglobus fulgidus (strain ATCC 49558 / DSM 4304 / JCM 9628 / NBRC 100126 / VC-16).